We begin with the raw amino-acid sequence, 548 residues long: Chaperonin GroEL (548 aa).

ATP is bound by residues 30–33 (TLGP), lysine 51, 87–91 (DGTTT), glycine 415, 479–481 (NAA), and aspartate 495. The segment at 526-548 (KEDKSSDLGSAPAGGMGGMGGMM) is disordered. The segment covering 537–548 (PAGGMGGMGGMM) has biased composition (gly residues).

This sequence belongs to the chaperonin (HSP60) family. In terms of assembly, forms a cylinder of 14 subunits composed of two heptameric rings stacked back-to-back. Interacts with the co-chaperonin GroES.

It localises to the cytoplasm. The enzyme catalyses ATP + H2O + a folded polypeptide = ADP + phosphate + an unfolded polypeptide.. Its function is as follows. Together with its co-chaperonin GroES, plays an essential role in assisting protein folding. The GroEL-GroES system forms a nano-cage that allows encapsulation of the non-native substrate proteins and provides a physical environment optimized to promote and accelerate protein folding. The protein is Chaperonin GroEL of Buchnera aphidicola subsp. Pterocomma populeum.